The sequence spans 325 residues: Melanocortin receptor 5 (325 aa).

The Extracellular portion of the chain corresponds to 1-37 (MNSSFHLHFLDLGLNTTDGNLSGLSVQNASSLCEDMG). 4 N-linked (GlcNAc...) asparagine glycosylation sites follow: Asn2, Asn15, Asn20, and Asn28. Residues 38–61 (IAVEVFLALGLISLLENILVIGAI) form a helical membrane-spanning segment. The Cytoplasmic segment spans residues 62–73 (VRNRNLHTPMYF). Residues 74 to 97 (FVGSLAVADMLVSLSNSWETITIY) form a helical membrane-spanning segment. The Extracellular segment spans residues 98–114 (LLTNKHLVMADASVRHL). A helical transmembrane segment spans residues 115–138 (DNVFDSMICISVVASMCSLLAIAV). Residues 139-155 (DRYVTIFCALRYQRIMT) are Cytoplasmic-facing. The chain crosses the membrane as a helical span at residues 156–179 (GRRSGAIIGGIWAFCASCGTVFIV). Residues 180 to 186 (YYESTYV) lie on the Extracellular side of the membrane. Residues 187–211 (VICLIAMFLTMLLLMASLYTHMFLL) form a helical membrane-spanning segment. The Cytoplasmic portion of the chain corresponds to 212 to 239 (ARTHIRRIATLPGHSSVRQRTGVKGAIT). A helical transmembrane segment spans residues 240 to 265 (LAMLLGVFIVCWAPFFLHLILMISCP). Residues 266-273 (HNLYCSCF) are Extracellular-facing. A helical membrane pass occupies residues 274-297 (MSHFNMYLILIMCNSVIDPLIYAF). Over 298–325 (RSQEMRKTFKEIVCFQSFRTPCRFPSRY) the chain is Cytoplasmic. Cys311 is lipidated: S-palmitoyl cysteine.

The protein belongs to the G-protein coupled receptor 1 family.

It is found in the cell membrane. In terms of biological role, receptor for MSH (alpha, beta and gamma) and ACTH. The activity of this receptor is mediated by G proteins which activate adenylate cyclase. This receptor is a possible mediator of the immunomodulation properties of melanocortins. The polypeptide is Melanocortin receptor 5 (MC5R) (Bos taurus (Bovine)).